The primary structure comprises 137 residues: Large ribosomal subunit protein uL16c (137 aa).

The interval 1 to 21 is disordered; it reads MLSPKKTKYRKQHRGRMKGKA.

The protein belongs to the universal ribosomal protein uL16 family. In terms of assembly, part of the 50S ribosomal subunit.

It is found in the plastid. The protein resides in the chloroplast. This Oedogonium cardiacum (Filamentous green alga) protein is Large ribosomal subunit protein uL16c.